A 410-amino-acid polypeptide reads, in one-letter code: Squalene synthase 1 (410 aa).

Residue Gly-2 is modified to N-acetylglycine. A run of 2 helical transmembrane segments spans residues 283 to 303 and 387 to 407; these read SIFR…ALCY and QPNS…FAYL.

This sequence belongs to the phytoene/squalene synthase family. Mg(2+) is required as a cofactor. The cofactor is Mn(2+). In terms of tissue distribution, expressed in all tissues analyzed (seedlings, cotyledons, inflorescences, siliques, leaves, stems and roots). Highly expressed in roots and pollen.

Its subcellular location is the endoplasmic reticulum membrane. The enzyme catalyses 2 (2E,6E)-farnesyl diphosphate + NADPH + H(+) = squalene + 2 diphosphate + NADP(+). It carries out the reaction 2 (2E,6E)-farnesyl diphosphate + NADH + H(+) = squalene + 2 diphosphate + NAD(+). The protein operates within terpene metabolism; lanosterol biosynthesis; lanosterol from farnesyl diphosphate: step 1/3. This Arabidopsis thaliana (Mouse-ear cress) protein is Squalene synthase 1.